A 302-amino-acid chain; its full sequence is N-acetylmuramic acid 6-phosphate etherase (302 aa).

Residues 58 to 221 (IGESFLNGGR…STGAMVKTGK (164 aa)) enclose the SIS domain. Glu-86 functions as the Proton donor in the catalytic mechanism. Glu-117 is a catalytic residue.

Belongs to the GCKR-like family. MurNAc-6-P etherase subfamily. Homodimer.

The enzyme catalyses N-acetyl-D-muramate 6-phosphate + H2O = N-acetyl-D-glucosamine 6-phosphate + (R)-lactate. The protein operates within amino-sugar metabolism; N-acetylmuramate degradation. Specifically catalyzes the cleavage of the D-lactyl ether substituent of MurNAc 6-phosphate, producing GlcNAc 6-phosphate and D-lactate. In Clostridium botulinum (strain Langeland / NCTC 10281 / Type F), this protein is N-acetylmuramic acid 6-phosphate etherase.